The following is a 431-amino-acid chain: UDP-N-acetylglucosamine 1-carboxyvinyltransferase (431 aa).

Residue 22–23 (KN) participates in phosphoenolpyruvate binding. Arginine 102 is a binding site for UDP-N-acetyl-alpha-D-glucosamine. The active-site Proton donor is cysteine 126. Cysteine 126 carries the post-translational modification 2-(S-cysteinyl)pyruvic acid O-phosphothioketal. Residues 131-135 (RPVDL), aspartate 316, and isoleucine 338 contribute to the UDP-N-acetyl-alpha-D-glucosamine site.

It belongs to the EPSP synthase family. MurA subfamily.

It is found in the cytoplasm. It catalyses the reaction phosphoenolpyruvate + UDP-N-acetyl-alpha-D-glucosamine = UDP-N-acetyl-3-O-(1-carboxyvinyl)-alpha-D-glucosamine + phosphate. Its pathway is cell wall biogenesis; peptidoglycan biosynthesis. In terms of biological role, cell wall formation. Adds enolpyruvyl to UDP-N-acetylglucosamine. The sequence is that of UDP-N-acetylglucosamine 1-carboxyvinyltransferase from Beijerinckia indica subsp. indica (strain ATCC 9039 / DSM 1715 / NCIMB 8712).